Reading from the N-terminus, the 101-residue chain is MVVASAPAKPGSVGQQESASRDATASPWVTIVWDDPVNLMTYVTYVFQKLFGYSEPHATKLMLQVHNEGRAVVSAGSREAMEVDVSKLHAAGLWATMQQDR.

Residues 1–24 are disordered; that stretch reads MVVASAPAKPGSVGQQESASRDAT. Over residues 13-23 the composition is skewed to polar residues; sequence VGQQESASRDA.

Belongs to the ClpS family. Binds to the N-terminal domain of the chaperone ClpA.

Involved in the modulation of the specificity of the ClpAP-mediated ATP-dependent protein degradation. In Mycobacterium marinum (strain ATCC BAA-535 / M), this protein is ATP-dependent Clp protease adapter protein ClpS.